A 450-amino-acid chain; its full sequence is Glucose-6-phosphate isomerase (450 aa).

Phosphothreonine is present on T39. The active-site Proton donor is E291. Residues H312 and K426 contribute to the active site.

This sequence belongs to the GPI family.

The protein localises to the cytoplasm. It catalyses the reaction alpha-D-glucose 6-phosphate = beta-D-fructose 6-phosphate. The protein operates within carbohydrate biosynthesis; gluconeogenesis. It participates in carbohydrate degradation; glycolysis; D-glyceraldehyde 3-phosphate and glycerone phosphate from D-glucose: step 2/4. Catalyzes the reversible isomerization of glucose-6-phosphate to fructose-6-phosphate. The sequence is that of Glucose-6-phosphate isomerase from Bacillus anthracis.